Consider the following 257-residue polypeptide: Lipid A 4'-phosphatase (257 aa).

6 consecutive transmembrane segments (helical) span residues Phe21–Phe41, Ile85–Tyr105, Lys119–Leu139, Cys174–Val194, Ala201–Gly221, and Leu225–Leu245.

Belongs to the lipid A LpxF 4'-phosphatase family.

It is found in the cell inner membrane. The protein operates within bacterial outer membrane biogenesis; LPS lipid A biosynthesis. Its function is as follows. Probably removes the 4'-phosphate moiety from lipid A species. Not seen to act on other membrane components, nor does it dephosphorylate the 1-phosphate group of lipid A and/or lipid A precursors. This Rhizobium etli (strain ATCC 51251 / DSM 11541 / JCM 21823 / NBRC 15573 / CFN 42) protein is Lipid A 4'-phosphatase.